Consider the following 157-residue polypeptide: Mediator of RNA polymerase II transcription subunit 10 (157 aa).

The protein belongs to the Mediator complex subunit 10 family. Component of the Mediator complex, which is composed of at least 21 subunits that form three structurally distinct submodules. The Mediator head module contains MED6, MED8, MED11, SRB4/MED17, SRB5/MED18, ROX3/MED19, SRB2/MED20 and SRB6/MED22, the middle module contains MED1, MED4, NUT1/MED5, MED7, CSE2/MED9, NUT2/MED10, SRB7/MED21 and SOH1/MED31, and the tail module contains MED2, PGD1/MED3, RGR1/MED14, GAL11/MED15 and SIN4/MED16. The head and the middle modules interact directly with RNA polymerase II, whereas the elongated tail module interacts with gene-specific regulatory proteins. NUT2/MED10 interacts directly with SRB7/MED21.

It is found in the nucleus. Its function is as follows. Component of the Mediator complex, a coactivator involved in the regulated transcription of nearly all RNA polymerase II-dependent genes. Mediator functions as a bridge to convey information from gene-specific regulatory proteins to the basal RNA polymerase II transcription machinery. The Mediator complex, having a compact conformation in its free form, is recruited to promoters by direct interactions with regulatory proteins and serves for the assembly of a functional preinitiation complex with RNA polymerase II and the general transcription factors. The Mediator complex unfolds to an extended conformation and partially surrounds RNA polymerase II, specifically interacting with the unphosphorylated form of the C-terminal domain (CTD) of RNA polymerase II. The Mediator complex dissociates from the RNA polymerase II holoenzyme and stays at the promoter when transcriptional elongation begins. The sequence is that of Mediator of RNA polymerase II transcription subunit 10 (NUT2) from Saccharomyces cerevisiae (strain ATCC 204508 / S288c) (Baker's yeast).